The sequence spans 196 residues: DNA replication complex GINS protein PSF1 (196 aa).

It belongs to the GINS1/PSF1 family. In terms of assembly, component of the GINS complex which is a heterotetramer of gins1/psf1, gins2/psf2, gins3/psf3 and gins4/sld5. Component of the CMG helicase complex, composed of the mcm2-7 complex, the GINS complex and cdc45.

The protein localises to the nucleus. It is found in the chromosome. In terms of biological role, required for correct functioning of the GINS complex, a complex that plays an essential role in the initiation of DNA replication, and progression of DNA replication forks. GINS complex is a core component of CDC45-MCM-GINS (CMG) helicase, the molecular machine that unwinds template DNA during replication, and around which the replisome is built. The sequence is that of DNA replication complex GINS protein PSF1 from Xenopus laevis (African clawed frog).